Consider the following 445-residue polypeptide: CBL-interacting serine/threonine-protein kinase 8 (445 aa).

A Protein kinase domain is found at 9–262; that stretch reads YELGRTIGEG…IAEIRKDEWF (254 aa). ATP contacts are provided by residues 15-23 and Lys-38; that span reads IGEGTFAKV. Asp-132 acts as the Proton acceptor in catalysis. The activation loop stretch occupies residues 150 to 177; the sequence is DFGLSALPEQGVTILKTTCGTPNYVAPE. Residue Ser-154 is modified to Phosphoserine. A Phosphothreonine modification is found at Thr-166. The 25-residue stretch at 302-326 folds into the NAF domain; the sequence is TGPLTLNAFDLIILSQGLNLATLFD. The tract at residues 333–362 is PPI; it reads KHQTRFISHKPANVVLSSMEVVSQSMGFKT.

Belongs to the protein kinase superfamily. CAMK Ser/Thr protein kinase family. SNF1 subfamily. As to quaternary structure, interacts with CBL1 and CBL9. Mn(2+) is required as a cofactor. Mostly expressed in roots, and, to a lower extent, in leaves, stems, flowers, and siliques.

The catalysed reaction is L-seryl-[protein] + ATP = O-phospho-L-seryl-[protein] + ADP + H(+). It catalyses the reaction L-threonyl-[protein] + ATP = O-phospho-L-threonyl-[protein] + ADP + H(+). Functionally, CIPK serine-threonine protein kinases interact with CBL proteins. Binding of a CBL protein to the regulatory NAF domain of CIPK protein lead to the activation of the kinase in a calcium-dependent manner. In Arabidopsis thaliana (Mouse-ear cress), this protein is CBL-interacting serine/threonine-protein kinase 8 (CIPK8).